Consider the following 387-residue polypeptide: MEQVVIVDAIRTPMGRSKGGAFRNVRAEDLSAHLMRSLLARNPALEAAALDDIYWGCVQQTLEQGFNIARNAALLAEVPHSVPAVTVNRLCGSSMQALHDAARMIMTGDAQACLVGGVEHMGHVPMSHGVDFHPGLSRNVAKAAGMMGLTAEMLARMHGISREMQDAFAARSHARAWAATQSAAFKNEIIPTGGHDADGVLKQFNYDEVIRPETTVEALATLRPAFDPVNGMVTAGTSSALSDGAAAMLVMSESRAHELGLKPRARVRSMAVVGCDPSIMGYGPVPASKLALKKAGLSASDIGVFEMNEAFAAQILPCIKDLGLIEQIDEKINLNGGAIALGHPLGCSGARISTTLLNLMERKDVQFGLATMCIGLGQGIATVFERV.

Cys-91 acts as the Acyl-thioester intermediate in catalysis. Residues His-343 and Cys-373 each act as proton acceptor in the active site.

It belongs to the thiolase-like superfamily. Thiolase family. As to quaternary structure, heterotetramer of two alpha chains (FadB) and two beta chains (FadA).

The protein resides in the cytoplasm. The enzyme catalyses an acyl-CoA + acetyl-CoA = a 3-oxoacyl-CoA + CoA. Its pathway is lipid metabolism; fatty acid beta-oxidation. Functionally, catalyzes the final step of fatty acid oxidation in which acetyl-CoA is released and the CoA ester of a fatty acid two carbons shorter is formed. Involved in the aerobic and anaerobic degradation of long-chain fatty acids. In Escherichia coli (strain K12), this protein is 3-ketoacyl-CoA thiolase FadA (fadA).